A 768-amino-acid polypeptide reads, in one-letter code: uncharacterized protein (768 aa).

This sequence to E.coli YkiA.

This is an uncharacterized protein from Escherichia coli (strain K12).